The chain runs to 642 residues: Threonine--tRNA ligase (642 aa).

The TGS domain occupies 1–61 (MPVITLPDGS…ENDAQLSIIT (61 aa)). A catalytic region spans residues 243–534 (DHRKIGKQLD…LTEEFAGFFP (292 aa)). Lys-286 is modified (N6-acetyllysine). The Zn(2+) site is built by Cys-334, His-385, and His-511.

The protein belongs to the class-II aminoacyl-tRNA synthetase family. As to quaternary structure, homodimer. It depends on Zn(2+) as a cofactor.

Its subcellular location is the cytoplasm. The catalysed reaction is tRNA(Thr) + L-threonine + ATP = L-threonyl-tRNA(Thr) + AMP + diphosphate + H(+). Catalyzes the attachment of threonine to tRNA(Thr) in a two-step reaction: L-threonine is first activated by ATP to form Thr-AMP and then transferred to the acceptor end of tRNA(Thr). Also edits incorrectly charged L-seryl-tRNA(Thr). In Shigella flexneri serotype 5b (strain 8401), this protein is Threonine--tRNA ligase.